The following is a 484-amino-acid chain: L-carnitine dehydrogenase/betainyl-CoA thioesterase (484 aa).

Residues 1–322 (MKIAAIGGGV…ENRFYARNGK (322 aa)) are L-carnitine dehydrogenase. 7 to 12 (GGGVIG) contributes to the NAD(+) binding site. A betainyl-CoA thioesterase region spans residues 323 to 484 (VQADYPLRLH…RAVRLKETSA (162 aa)).

The protein in the N-terminal section; belongs to the 3-hydroxyacyl-CoA dehydrogenase family. L-carnitine dehydrogenase subfamily. This sequence in the C-terminal section; belongs to the betainyl-CoA thioesterase family. In terms of assembly, homodimer.

The protein localises to the cytoplasm. It catalyses the reaction carnitine + NAD(+) = 3-dehydrocarnitine + NADH + H(+). It carries out the reaction N,N,N-trimethylglycyl-CoA + H2O = glycine betaine + CoA + H(+). It participates in amine and polyamine metabolism; carnitine metabolism. Its function is as follows. Multifunctional enzyme that catalyzes the NAD(+)-dependent oxidation of L-carnitine to 3-dehydrocarnitine and the cleavage of betainyl-CoA (N,N,N-trimethylglycyl-CoA) into glycine betaine and coenzyme A. This Agrobacterium fabrum (strain C58 / ATCC 33970) (Agrobacterium tumefaciens (strain C58)) protein is L-carnitine dehydrogenase/betainyl-CoA thioesterase.